The sequence spans 372 residues: Sesquiterpene synthase Agr9 (372 aa).

Aspartate 87, asparagine 225, serine 229, and glutamate 233 together coordinate Mg(2+). Residues 87–91 (DEYTD) carry the DDXXD motif motif. Positions 314 and 315 each coordinate (2E,6E)-farnesyl diphosphate.

It belongs to the terpene synthase family. The cofactor is Mg(2+).

It carries out the reaction (2E,6E)-farnesyl diphosphate = gamma-muurolene + diphosphate. The enzyme catalyses (2E,6E)-farnesyl diphosphate = delta-cadinene + diphosphate. Terpene cyclase that catalyzes the cyclization of farnesyl diphosphate (FPP) to various sesquiterpenes, including gamma-muurolene, beta-cadinene and delta-cadinene. This Cyclocybe aegerita (Black poplar mushroom) protein is Sesquiterpene synthase Agr9.